The primary structure comprises 62 residues: U8-theraphotoxin-Cg1a 1 (62 aa).

The signal sequence occupies residues 1–21; it reads MKTLVLFIIFGLAALFLLSSA. Positions 22–29 are excised as a propeptide; that stretch reads NELEETER. Intrachain disulfides connect C31/C46, C38/C51, and C45/C58.

Belongs to the neurotoxin 10 (Hwtx-1) family. 30 (Jztx-14) subfamily. In terms of tissue distribution, expressed by the venom gland.

Its subcellular location is the secreted. Probable ion channel inhibitor. This chain is U8-theraphotoxin-Cg1a 1, found in Chilobrachys guangxiensis (Chinese earth tiger tarantula).